Reading from the N-terminus, the 292-residue chain is NAD kinase (292 aa).

Catalysis depends on aspartate 72, which acts as the Proton acceptor. Residues 72-73 (DG), 146-147 (NE), histidine 157, arginine 174, aspartate 176, and 187-192 (TAYSLS) each bind NAD(+).

It belongs to the NAD kinase family. A divalent metal cation is required as a cofactor.

The protein localises to the cytoplasm. It carries out the reaction NAD(+) + ATP = ADP + NADP(+) + H(+). Involved in the regulation of the intracellular balance of NAD and NADP, and is a key enzyme in the biosynthesis of NADP. Catalyzes specifically the phosphorylation on 2'-hydroxyl of the adenosine moiety of NAD to yield NADP. The chain is NAD kinase from Shewanella woodyi (strain ATCC 51908 / MS32).